The chain runs to 141 residues: Putative pre-16S rRNA nuclease (141 aa).

It belongs to the YqgF nuclease family.

The protein localises to the cytoplasm. In terms of biological role, could be a nuclease involved in processing of the 5'-end of pre-16S rRNA. This is Putative pre-16S rRNA nuclease from Shewanella oneidensis (strain ATCC 700550 / JCM 31522 / CIP 106686 / LMG 19005 / NCIMB 14063 / MR-1).